The sequence spans 315 residues: 4-hydroxy-3-methylbut-2-enyl diphosphate reductase (315 aa).

Position 12 (cysteine 12) interacts with [4Fe-4S] cluster. (2E)-4-hydroxy-3-methylbut-2-enyl diphosphate contacts are provided by histidine 43 and histidine 81. Positions 43 and 81 each coordinate dimethylallyl diphosphate. Histidine 43 and histidine 81 together coordinate isopentenyl diphosphate. Cysteine 103 contributes to the [4Fe-4S] cluster binding site. Position 131 (histidine 131) interacts with (2E)-4-hydroxy-3-methylbut-2-enyl diphosphate. Histidine 131 lines the dimethylallyl diphosphate pocket. Histidine 131 is a binding site for isopentenyl diphosphate. The active-site Proton donor is glutamate 133. Residue threonine 170 participates in (2E)-4-hydroxy-3-methylbut-2-enyl diphosphate binding. Cysteine 198 is a binding site for [4Fe-4S] cluster. Positions 226, 228, and 271 each coordinate (2E)-4-hydroxy-3-methylbut-2-enyl diphosphate. 3 residues coordinate dimethylallyl diphosphate: serine 226, asparagine 228, and serine 271. Isopentenyl diphosphate-binding residues include serine 226, asparagine 228, and serine 271.

This sequence belongs to the IspH family. The cofactor is [4Fe-4S] cluster.

It carries out the reaction isopentenyl diphosphate + 2 oxidized [2Fe-2S]-[ferredoxin] + H2O = (2E)-4-hydroxy-3-methylbut-2-enyl diphosphate + 2 reduced [2Fe-2S]-[ferredoxin] + 2 H(+). It catalyses the reaction dimethylallyl diphosphate + 2 oxidized [2Fe-2S]-[ferredoxin] + H2O = (2E)-4-hydroxy-3-methylbut-2-enyl diphosphate + 2 reduced [2Fe-2S]-[ferredoxin] + 2 H(+). The protein operates within isoprenoid biosynthesis; dimethylallyl diphosphate biosynthesis; dimethylallyl diphosphate from (2E)-4-hydroxy-3-methylbutenyl diphosphate: step 1/1. It functions in the pathway isoprenoid biosynthesis; isopentenyl diphosphate biosynthesis via DXP pathway; isopentenyl diphosphate from 1-deoxy-D-xylulose 5-phosphate: step 6/6. Its function is as follows. Catalyzes the conversion of 1-hydroxy-2-methyl-2-(E)-butenyl 4-diphosphate (HMBPP) into a mixture of isopentenyl diphosphate (IPP) and dimethylallyl diphosphate (DMAPP). Acts in the terminal step of the DOXP/MEP pathway for isoprenoid precursor biosynthesis. This chain is 4-hydroxy-3-methylbut-2-enyl diphosphate reductase, found in Anoxybacillus flavithermus (strain DSM 21510 / WK1).